We begin with the raw amino-acid sequence, 289 residues long: Rhodopsin (289 aa).

The Extracellular portion of the chain corresponds to 1 to 7 (YLVNPAA). A helical membrane pass occupies residues 8 to 32 (YAALGAYMFLLILIGFPVNFLTLYV). The Cytoplasmic segment spans residues 33–44 (TLEHKKLRTPLN). A helical transmembrane segment spans residues 45-67 (YILLNLAVADLFMVLGGFTTTMY). At 68–81 (TSMHGYFVLGRLGC) the chain is on the extracellular side. Cysteines 81 and 158 form a disulfide. The chain crosses the membrane as a helical span at residues 82–104 (NLEGFFATLGGEIALWSLVVLAI). Positions 105-107 (ERW) match the 'Ionic lock' involved in activated form stabilization motif. Over 105 to 123 (ERWIVVCKPISNFRFTEDH) the chain is Cytoplasmic. A helical transmembrane segment spans residues 124–144 (AIMGLAFSWVMALSCSVPPLV). Over 145-173 (GWSRYIPEAMQCSCGVDYYTRAEGFNTES) the chain is Extracellular. The chain crosses the membrane as a helical span at residues 174–195 (FVLYMFTVHFLIPLSVIFFCYG). Residues 196–223 (RLLCAVKEAAAAQQESETTQRSEKEVSR) lie on the Cytoplasmic side of the membrane. A helical membrane pass occupies residues 224–245 (MVVLMVIGFLVCWLPYASTAWW). The Extracellular portion of the chain corresponds to 246–257 (IFCNQGSEFGPV). The helical transmembrane segment at 258–279 (FMTIPAFFAKSSAIYNPMIYIC) threads the bilayer. The residue at position 267 (Lys-267) is an N6-(retinylidene)lysine. Residues 280 to 289 (MNKQFRHCMI) lie on the Cytoplasmic side of the membrane.

It belongs to the G-protein coupled receptor 1 family. Opsin subfamily. In terms of processing, phosphorylated on some or all of the serine and threonine residues present in the C-terminal region. Contains one covalently linked retinal chromophore.

It is found in the membrane. The protein resides in the cell projection. Its subcellular location is the cilium. It localises to the photoreceptor outer segment. Its function is as follows. Photoreceptor required for image-forming vision at low light intensity. While most salt water fish species use retinal as chromophore, most freshwater fish use 3-dehydroretinal, or a mixture of retinal and 3-dehydroretinal. Light-induced isomerization of 11-cis to all-trans retinal triggers a conformational change that activates signaling via G-proteins. Subsequent receptor phosphorylation mediates displacement of the bound G-protein alpha subunit by arrestin and terminates signaling. The polypeptide is Rhodopsin (rho) (Comephorus dybowskii).